The chain runs to 119 residues: MDYVSLLNQVWQKQVNSSQEGTLAPVRPTYAYRPVQGNLQCPIKWRCIYTFAGYTGTATEPTKVLAKQEAARKVCLRLQEYGRLDGFGLRLRYSTAFEHNRYDASKSYFYTQTSSSSHE.

Residues 3 to 79 (YVSLLNQVWQ…AARKVCLRLQ (77 aa)) form the DRBM domain.

As to quaternary structure, interacts with host RUNX1 isoform b.

It is found in the host nucleus. The protein resides in the host nucleolus. The protein localises to the host mitochondrion. Its function is as follows. Induces host cell G0/G1 arrest and apoptosis. The sequence is that of Non-structural protein 3b from Pipistrellus abramus (Japanese pipistrelle).